Here is a 321-residue protein sequence, read N- to C-terminus: Ribosomal RNA small subunit methyltransferase H (321 aa).

Residues 40–42 (GGH), Asp-60, Phe-84, Asp-106, and Gln-113 each bind S-adenosyl-L-methionine.

The protein belongs to the methyltransferase superfamily. RsmH family.

Its subcellular location is the cytoplasm. It catalyses the reaction cytidine(1402) in 16S rRNA + S-adenosyl-L-methionine = N(4)-methylcytidine(1402) in 16S rRNA + S-adenosyl-L-homocysteine + H(+). Its function is as follows. Specifically methylates the N4 position of cytidine in position 1402 (C1402) of 16S rRNA. This chain is Ribosomal RNA small subunit methyltransferase H, found in Pasteurella multocida (strain Pm70).